Here is a 193-residue protein sequence, read N- to C-terminus: Signal peptidase I (193 aa).

Residues 1-25 lie on the Cytoplasmic side of the membrane; that stretch reads MTEEQKPTSEKSVKRKSNTYWEWGK. Residues 26–42 traverse the membrane as a helical segment; sequence AIIIAVALALLIRHFLF. Topologically, residues 43–193 are extracellular; it reads EPYLVEGSSM…FPFHDMRQTK (151 aa). Catalysis depends on residues S51 and K93.

Belongs to the peptidase S26 family.

It is found in the cell membrane. The catalysed reaction is Cleavage of hydrophobic, N-terminal signal or leader sequences from secreted and periplasmic proteins.. This is Signal peptidase I (sipS2) from Bacillus amyloliquefaciens (Bacillus velezensis).